Reading from the N-terminus, the 270-residue chain is Interleukin-1 beta (270 aa).

The propeptide occupies 1–118 (MARVPEPTSE…KCDDNAFVHD (118 aa)).

Belongs to the IL-1 family. Monomer. In its precursor form, weakly interacts with full-length MEFV; the mature cytokine does not interact at all. Interacts with integrins ITGAV:ITGBV and ITGA5:ITGB1; integrin-binding is required for IL1B signaling. Interacts with cargo receptor TMED10; the interaction is direct and is required for the secretion of IL1B mature form. Interacts with HSP90AB1; the interaction facilitates cargo translocation into the ERGIC. Interacts with HSP90B1; the interaction facilitates cargo translocation into the ERGIC.

The protein resides in the cytoplasm. The protein localises to the cytosol. It is found in the secreted. It localises to the lysosome. Its subcellular location is the extracellular exosome. Its function is as follows. Potent pro-inflammatory cytokine. Initially discovered as the major endogenous pyrogen, induces prostaglandin synthesis, neutrophil influx and activation, T-cell activation and cytokine production, B-cell activation and antibody production, and fibroblast proliferation and collagen production. Promotes Th17 differentiation of T-cells. Synergizes with IL12/interleukin-12 to induce IFNG synthesis from T-helper 1 (Th1) cells. Plays a role in angiogenesis by inducing VEGF production synergistically with TNF and IL6. Involved in transduction of inflammation downstream of pyroptosis: its mature form is specifically released in the extracellular milieu by passing through the gasdermin-D (GSDMD) pore. The polypeptide is Interleukin-1 beta (IL1B) (Mustela putorius furo (European domestic ferret)).